Consider the following 154-residue polypeptide: MIDIGITKLAIIGGIALIVIGPEKLPGLAKTIGTLLGRARRYVADVKDEVNRSMDLDELKKMKDTVESAVRDVDNTIQTSAADFEKNWADATAQAADTPFNDFSPTPPAYRHPNKKWRVKQGATPNWYKARAGIRTRALSGAARVARFRPHKVN.

The helical transmembrane segment at 1–21 (MIDIGITKLAIIGGIALIVIG) threads the bilayer.

Belongs to the TatB family. The Tat system comprises two distinct complexes: a TatABC complex, containing multiple copies of TatA, TatB and TatC subunits, and a separate TatA complex, containing only TatA subunits. Substrates initially bind to the TatABC complex, which probably triggers association of the separate TatA complex to form the active translocon.

Its subcellular location is the cell inner membrane. In terms of biological role, part of the twin-arginine translocation (Tat) system that transports large folded proteins containing a characteristic twin-arginine motif in their signal peptide across membranes. Together with TatC, TatB is part of a receptor directly interacting with Tat signal peptides. TatB may form an oligomeric binding site that transiently accommodates folded Tat precursor proteins before their translocation. The sequence is that of Sec-independent protein translocase protein TatB from Albidiferax ferrireducens (strain ATCC BAA-621 / DSM 15236 / T118) (Rhodoferax ferrireducens).